A 304-amino-acid chain; its full sequence is Mitochondrial RNA-splicing protein MRS4 (304 aa).

3 Solcar repeats span residues 21-108 (APLH…CKAR), 118-200 (HQPM…ASKF), and 207-300 (YNPL…AKHF). The next 6 membrane-spanning stretches (helical) occupy residues 23–41 (LHSQ…HSLM), 83–102 (GVQS…FGTY), 120–139 (PMKT…ALMN), 175–194 (SYPT…FMIY), 209–228 (PLIH…ALTT), and 275–288 (GLKP…PATA).

The protein belongs to the mitochondrial carrier (TC 2.A.29) family.

It is found in the mitochondrion inner membrane. In terms of biological role, MRS4 suppresses a mitochondrial splice defect in the first intron of the COB gene. It may act as a carrier, exerting its suppressor activity via modulation of solute concentrations in the mitochondrion (possibly of cations). Not essential. The protein is Mitochondrial RNA-splicing protein MRS4 (MRS4) of Saccharomyces cerevisiae (strain ATCC 204508 / S288c) (Baker's yeast).